Reading from the N-terminus, the 467-residue chain is UDP-N-acetylmuramate--L-alanine ligase (467 aa).

ATP is bound at residue 114–120 (GTHGKTT).

It belongs to the MurCDEF family.

It is found in the cytoplasm. It catalyses the reaction UDP-N-acetyl-alpha-D-muramate + L-alanine + ATP = UDP-N-acetyl-alpha-D-muramoyl-L-alanine + ADP + phosphate + H(+). It participates in cell wall biogenesis; peptidoglycan biosynthesis. Its function is as follows. Cell wall formation. In Chlorobium chlorochromatii (strain CaD3), this protein is UDP-N-acetylmuramate--L-alanine ligase.